The sequence spans 409 residues: 4-hydroxy-3-methylbut-2-en-1-yl diphosphate synthase (flavodoxin) (409 aa).

Cysteine 298, cysteine 301, cysteine 344, and glutamate 351 together coordinate [4Fe-4S] cluster.

This sequence belongs to the IspG family. [4Fe-4S] cluster is required as a cofactor.

The enzyme catalyses (2E)-4-hydroxy-3-methylbut-2-enyl diphosphate + oxidized [flavodoxin] + H2O + 2 H(+) = 2-C-methyl-D-erythritol 2,4-cyclic diphosphate + reduced [flavodoxin]. It participates in isoprenoid biosynthesis; isopentenyl diphosphate biosynthesis via DXP pathway; isopentenyl diphosphate from 1-deoxy-D-xylulose 5-phosphate: step 5/6. In terms of biological role, converts 2C-methyl-D-erythritol 2,4-cyclodiphosphate (ME-2,4cPP) into 1-hydroxy-2-methyl-2-(E)-butenyl 4-diphosphate. The protein is 4-hydroxy-3-methylbut-2-en-1-yl diphosphate synthase (flavodoxin) of Dechloromonas aromatica (strain RCB).